A 52-amino-acid chain; its full sequence is Large ribosomal subunit protein bL33 (52 aa).

Belongs to the bacterial ribosomal protein bL33 family.

This Chlamydia abortus (strain DSM 27085 / S26/3) (Chlamydophila abortus) protein is Large ribosomal subunit protein bL33.